We begin with the raw amino-acid sequence, 254 residues long: Alcohol dehydrogenase (254 aa).

10 to 33 (FVAGLGGIGLDTSREIVKSGPKNL) is an NAD(+) binding site. Ser-138 provides a ligand contact to substrate. The active-site Proton acceptor is Tyr-151.

This sequence belongs to the short-chain dehydrogenases/reductases (SDR) family. As to quaternary structure, homodimer.

The enzyme catalyses a primary alcohol + NAD(+) = an aldehyde + NADH + H(+). It catalyses the reaction a secondary alcohol + NAD(+) = a ketone + NADH + H(+). This chain is Alcohol dehydrogenase (Adh), found in Drosophila adiastola (Fruit fly).